The sequence spans 779 residues: 3-isopropylmalate dehydratase (779 aa).

3 residues coordinate [4Fe-4S] cluster: C360, C421, and C424. The tract at residues 484 to 518 (QDQSSPKVEVTSEDEKELESAAYDHAEPVQPEDAP) is disordered. S488 carries the phosphoserine modification. T494 is modified (phosphothreonine). S495 is modified (phosphoserine). Positions 501-510 (LESAAYDHAE) are enriched in basic and acidic residues.

The protein belongs to the aconitase/IPM isomerase family. In terms of assembly, monomer. The cofactor is [4Fe-4S] cluster.

It catalyses the reaction (2R,3S)-3-isopropylmalate = (2S)-2-isopropylmalate. Its pathway is amino-acid biosynthesis; L-leucine biosynthesis; L-leucine from 3-methyl-2-oxobutanoate: step 2/4. Catalyzes the isomerization between 2-isopropylmalate and 3-isopropylmalate, via the formation of 2-isopropylmaleate. In Saccharomyces cerevisiae (strain ATCC 204508 / S288c) (Baker's yeast), this protein is 3-isopropylmalate dehydratase (LEU1).